The primary structure comprises 296 residues: MHVPVLLEELILALEINPKGFYVDLTLGRGGHSLAILEKISNGKLVVFDKDQDALDQTRPKLLALKQNIEIIWSDFSRFDFYLENLGIQFVDGFIIDLGVSSPQIDDPARGFSYSKDGNLDMRMDKSQKLSAFIVLNEYPYEKLVEIFFKYGQIPYAREIARAIINSRPLKTTFELVNLVKKVIPALVLVKKNFIKNVFQAVRIEVNNELDSLQKLLEKLPKFLKQGSKVAIITFHSLEDRIVKKAFLDLIRKDKLEFFQKGLPKFSMKVFRPKANELKSNPRAKSAKLRLLLQNR.

S-adenosyl-L-methionine is bound by residues 30 to 32 (GGH), Asp49, Phe76, Asp97, and Gln104.

It belongs to the methyltransferase superfamily. RsmH family.

The protein resides in the cytoplasm. The enzyme catalyses cytidine(1402) in 16S rRNA + S-adenosyl-L-methionine = N(4)-methylcytidine(1402) in 16S rRNA + S-adenosyl-L-homocysteine + H(+). Functionally, specifically methylates the N4 position of cytidine in position 1402 (C1402) of 16S rRNA. The sequence is that of Ribosomal RNA small subunit methyltransferase H from Mesomycoplasma hyopneumoniae (strain 232) (Mycoplasma hyopneumoniae).